Reading from the N-terminus, the 271-residue chain is Calcium-binding protein 4 (271 aa).

A disordered region spans residues 1–105 (MATEHNVQLV…RSDPQQDAAQ (105 aa)). Residue Ser37 is modified to Phosphoserine; by PKC/PRKCZ. Residues 45 to 67 (GSQKASSGDQSSSQGSEASGSSK) are compositionally biased toward low complexity. The span at 87-96 (ASHRHSHRHR) shows a compositional bias: basic residues. EF-hand domains follow at residues 125 to 160 (EELE…LGYM), 179 to 196 (GFVD…KLRE), 202 to 237 (LGVR…LLGE), and 239 to 271 (LEGT…LSTG). Asp138, Asp140, Asp142, Tyr144, and Glu149 together coordinate Ca(2+). Residues Asp215, Asp217, Asp219, Arg221, Glu226, Asp252, Asn254, Asp256, Thr258, and Glu263 each coordinate Ca(2+).

In terms of assembly, interacts with CACNA1F and CACNA1D (via IQ domain) in a calcium independent manner. Interacts (via N-terminus) with UNC119. Phosphorylated. Phosphorylation levels change with the light conditions and regulate the activity, but has no effect on calcium binding. In terms of tissue distribution, expressed in retina and in the inner hair cells (IHC) of the cochlea.

It is found in the cytoplasm. Its subcellular location is the presynapse. Its function is as follows. Involved in normal synaptic function through regulation of Ca(2+) influx and neurotransmitter release in photoreceptor synaptic terminals and in auditory transmission. Modulator of CACNA1D and CACNA1F, suppressing the calcium-dependent inactivation and shifting the activation range to more hyperpolarized voltages. The chain is Calcium-binding protein 4 (Cabp4) from Mus musculus (Mouse).